Consider the following 531-residue polypeptide: Peptide chain release factor 3 (531 aa).

The tr-type G domain occupies 10 to 278; the sequence is RRRRTFAIIS…SLIDWAPAPK (269 aa). Residues 19 to 26, 87 to 91, and 141 to 144 contribute to the GTP site; these read SHPDAGKT, DTPGH, and NKYD.

It belongs to the TRAFAC class translation factor GTPase superfamily. Classic translation factor GTPase family. PrfC subfamily.

It is found in the cytoplasm. Its function is as follows. Increases the formation of ribosomal termination complexes and stimulates activities of RF-1 and RF-2. It binds guanine nucleotides and has strong preference for UGA stop codons. It may interact directly with the ribosome. The stimulation of RF-1 and RF-2 is significantly reduced by GTP and GDP, but not by GMP. This Neisseria meningitidis serogroup B (strain ATCC BAA-335 / MC58) protein is Peptide chain release factor 3.